Consider the following 797-residue polypeptide: Xaa-Pro dipeptidyl-peptidase (797 aa).

Residues S370, D490, and H521 each act as charge relay system in the active site.

The protein belongs to the peptidase S15 family. Homodimer.

The protein localises to the cytoplasm. It carries out the reaction Hydrolyzes Xaa-Pro-|- bonds to release unblocked, N-terminal dipeptides from substrates including Ala-Pro-|-p-nitroanilide and (sequentially) Tyr-Pro-|-Phe-Pro-|-Gly-Pro-|-Ile.. Functionally, removes N-terminal dipeptides sequentially from polypeptides having unsubstituted N-termini provided that the penultimate residue is proline. The polypeptide is Xaa-Pro dipeptidyl-peptidase (Lacticaseibacillus rhamnosus (Lactobacillus rhamnosus)).